A 653-amino-acid chain; its full sequence is MPDRLVPATLAFRDDGTLISPEYGDIYYNVAGAFAQANYVFIAGNRLPARWQGSRTFTIVETGFGTGTNFLATWAAWRDDPARCERLHFVSFEKHPFTRDDLRRALSHIVAGTTLSEQATLLADAWPPAVPGFHRIEFEGGRVVLTLALGDARELLPKLVARADAFYLDGFAPAKNADLWSADVFRALARVAADDATFATYSSAGVVKQALVEAGFAYRKMPGLAGKFAMLVGEYAPRWRMRRHEPPRALPVAVREAIVIGAGLAGCALVERLAARGWHVTLIERHAQIASEASGNPAGVFHPLMTRDDNVASRLTRSGFLHALARWRALEHAGHTFARSTRGMIHLAESADDFVRMRDAFDALGAPADHVTLLDADAARAHLNLPVAHGGLLFPHGGAVWPAGLCAAQVAAAGERVTLRTGTEVARLERDGDTWRAIGADGATIAEAPVVVLANAGDAVRLAGLRHVALQPVRGQLTLLPPGTTAPLPCPAIGDGYAVPLDDGTLLIGATFEPDDVDPEIRDAGHLENLARIRHLLPGLVGDVPDVDTLRGRVAFRWVVADRVPLIGPLADEAQAVANARALSGAKARDLPRTAGLYGAFGFGSRGLVWASLGAELIASQLEGEPLPLERELVDAVDPARFLIRALRGRKLG.

The interval 1–236 is tRNA (mnm(5)s(2)U34)-methyltransferase; it reads MPDRLVPATL…KFAMLVGEYA (236 aa). The FAD-dependent cmnm(5)s(2)U34 oxidoreductase stretch occupies residues 260–653; the sequence is IGAGLAGCAL…IRALRGRKLG (394 aa).

In the N-terminal section; belongs to the methyltransferase superfamily. tRNA (mnm(5)s(2)U34)-methyltransferase family. This sequence in the C-terminal section; belongs to the DAO family. The cofactor is FAD.

It is found in the cytoplasm. The enzyme catalyses 5-aminomethyl-2-thiouridine(34) in tRNA + S-adenosyl-L-methionine = 5-methylaminomethyl-2-thiouridine(34) in tRNA + S-adenosyl-L-homocysteine + H(+). Catalyzes the last two steps in the biosynthesis of 5-methylaminomethyl-2-thiouridine (mnm(5)s(2)U) at the wobble position (U34) in tRNA. Catalyzes the FAD-dependent demodification of cmnm(5)s(2)U34 to nm(5)s(2)U34, followed by the transfer of a methyl group from S-adenosyl-L-methionine to nm(5)s(2)U34, to form mnm(5)s(2)U34. The sequence is that of tRNA 5-methylaminomethyl-2-thiouridine biosynthesis bifunctional protein MnmC from Burkholderia vietnamiensis (strain G4 / LMG 22486) (Burkholderia cepacia (strain R1808)).